Here is a 702-residue protein sequence, read N- to C-terminus: Elongation factor G (702 aa).

A tr-type G domain is found at E8–T290. GTP is bound by residues A17–T24, D88–H92, and N142–D145.

Belongs to the TRAFAC class translation factor GTPase superfamily. Classic translation factor GTPase family. EF-G/EF-2 subfamily.

Its subcellular location is the cytoplasm. Catalyzes the GTP-dependent ribosomal translocation step during translation elongation. During this step, the ribosome changes from the pre-translocational (PRE) to the post-translocational (POST) state as the newly formed A-site-bound peptidyl-tRNA and P-site-bound deacylated tRNA move to the P and E sites, respectively. Catalyzes the coordinated movement of the two tRNA molecules, the mRNA and conformational changes in the ribosome. In Yersinia pseudotuberculosis serotype O:1b (strain IP 31758), this protein is Elongation factor G.